A 61-amino-acid chain; its full sequence is Small ribosomal subunit protein uS14 (61 aa).

Residues Cys-24, Cys-27, Cys-40, and Cys-43 each contribute to the Zn(2+) site.

The protein belongs to the universal ribosomal protein uS14 family. Zinc-binding uS14 subfamily. Part of the 30S ribosomal subunit. Contacts proteins S3 and S10. The cofactor is Zn(2+).

Functionally, binds 16S rRNA, required for the assembly of 30S particles and may also be responsible for determining the conformation of the 16S rRNA at the A site. The chain is Small ribosomal subunit protein uS14 from Natranaerobius thermophilus (strain ATCC BAA-1301 / DSM 18059 / JW/NM-WN-LF).